Here is a 475-residue protein sequence, read N- to C-terminus: Cytosolic non-specific dipeptidase (475 aa).

An N6-acetyllysine modification is found at Lys-9. Ser-58 is modified (phosphoserine). His-99 lines the Mn(2+) pocket. Residue Asp-101 is part of the active site. Mn(2+) is bound at residue Asp-132. The active-site Proton acceptor is the Glu-166. Residues 166–167 (EE), Asp-195, His-228, Thr-330, Arg-343, Ser-417, and His-445 each bind substrate. Mn(2+) contacts are provided by Glu-167 and Asp-195. His-445 provides a ligand contact to Mn(2+).

The protein belongs to the peptidase M20A family. As to quaternary structure, homodimer. It depends on Mn(2+) as a cofactor.

It is found in the cytoplasm. It carries out the reaction Hydrolysis of dipeptides, preferentially hydrophobic dipeptides including prolyl amino acids.. The catalysed reaction is L-threonyl-L-threonine + H2O = 2 L-threonine. It catalyses the reaction L-threonyl-L-serine + H2O = L-threonine + L-serine. The enzyme catalyses L-seryl-L-threonine + H2O = L-threonine + L-serine. It carries out the reaction L-cysteinylglycine + H2O = L-cysteine + glycine. The catalysed reaction is L-alanyl-L-cysteine + H2O = L-cysteine + L-alanine. It catalyses the reaction (S)-lactate + L-phenylalanine = N-[(S)-lactoyl]-L-phenylalanine + H2O. In terms of biological role, catalyzes the peptide bond hydrolysis in dipeptides, displaying a non-redundant activity toward threonyl dipeptides. Mediates threonyl dipeptide catabolism in a tissue-specific way. Has high dipeptidase activity toward cysteinylglycine, an intermediate metabolite in glutathione metabolism. Metabolizes N-lactoyl-amino acids, both through hydrolysis to form lactic acid and amino acids, as well as through their formation by reverse proteolysis. Plays a role in the regulation of cell cycle arrest and apoptosis. The sequence is that of Cytosolic non-specific dipeptidase (CNDP2) from Bos taurus (Bovine).